The chain runs to 228 residues: Aspartyl protease inhibitor (228 aa).

The first 15 residues, 1–15 (MKLIELCVLCAIAFA), serve as a signal peptide directing secretion. A compositionally biased stretch (basic and acidic residues) spans 88-112 (KLKSRMSGKKEEKAAVTSTKDEDLP). Residues 88–119 (KLKSRMSGKKEEKAAVTSTKDEDLPKPPQKPS) are disordered. An intrachain disulfide couples Cys134 to Cys224.

The protein belongs to the protease inhibitor I33 family.

The protein localises to the secreted. Aspartyl protease inhibitor. This is Aspartyl protease inhibitor from Trichostrongylus colubriformis (Black scour worm).